Consider the following 442-residue polypeptide: U11/U12 small nuclear ribonucleoprotein 65 kDa protein (442 aa).

The region spanning 28 to 102 is the RRM 1 domain; that stretch reads VTLLVRHLPD…KVLQVQRANK (75 aa). Disordered regions lie at residues 101 to 138, 200 to 242, and 290 to 317; these read NKPNDNKKSRQIEESVTKGNAFSTVSTNNDSKSGQILS, LALP…GRKR, and SKVTQDEYKEESENEDPADEPKEKDSNL. Positions 102 to 116 are enriched in basic and acidic residues; sequence KPNDNKKSRQIEESV. Positions 117–136 are enriched in polar residues; that stretch reads TKGNAFSTVSTNNDSKSGQI. Positions 200-209 are enriched in pro residues; the sequence is LALPTPPLPK. Positions 297 to 307 are enriched in acidic residues; the sequence is YKEESENEDPA. The RRM 2 domain occupies 352–434; it reads VVLYIKNLAK…KPMIIQFGRT (83 aa).

In terms of assembly, component of the U11/U12 snRNPs that are part of the U12-type spliceosome. Forms a complex with U12 snRNA. Ubiquitous.

It localises to the nucleus. Component of minor spliceosome required for U12-type intron splicing and alternative splicing of many introns. Binds specifically to U12 snRNA, which is necessary for branch-point site recognition. Required for normal plant development. In Arabidopsis thaliana (Mouse-ear cress), this protein is U11/U12 small nuclear ribonucleoprotein 65 kDa protein (SNRNP65).